A 364-amino-acid chain; its full sequence is 4-hydroxythreonine-4-phosphate dehydrogenase (364 aa).

2 residues coordinate substrate: histidine 148 and threonine 149. A divalent metal cation contacts are provided by histidine 177, histidine 216, and histidine 301. 3 residues coordinate substrate: lysine 309, asparagine 318, and arginine 327.

It belongs to the PdxA family. In terms of assembly, homodimer. Zn(2+) serves as cofactor. The cofactor is Mg(2+). Co(2+) is required as a cofactor.

The protein resides in the cytoplasm. It catalyses the reaction 4-(phosphooxy)-L-threonine + NAD(+) = 3-amino-2-oxopropyl phosphate + CO2 + NADH. It functions in the pathway cofactor biosynthesis; pyridoxine 5'-phosphate biosynthesis; pyridoxine 5'-phosphate from D-erythrose 4-phosphate: step 4/5. Catalyzes the NAD(P)-dependent oxidation of 4-(phosphooxy)-L-threonine (HTP) into 2-amino-3-oxo-4-(phosphooxy)butyric acid which spontaneously decarboxylates to form 3-amino-2-oxopropyl phosphate (AHAP). The protein is 4-hydroxythreonine-4-phosphate dehydrogenase of Campylobacter jejuni (strain RM1221).